We begin with the raw amino-acid sequence, 3351 residues long: Apolipophorins (3351 aa).

The signal sequence occupies residues 1–25; that stretch reads MARMKYNIALIGILASVLLTIAVNA. The region spanning 43–641 is the Vitellogenin domain; sequence YIPGNYYDYS…SQHGFLPRSS (599 aa). 7 N-linked (GlcNAc...) asparagine glycosylation sites follow: Asn-67, Asn-644, Asn-1514, Asn-1744, Asn-1932, Asn-1979, and Asn-2822. The VWFD domain occupies 2786–2952; sequence LRGHVVDGKH…DYGVGKCTAI (167 aa).

Interacts with Nrx-1 (via cytoplasmic domain); the interaction supports apolpp/ApoLI protein stability. May be modified covalently by lipidation. In terms of processing, cleaved into 2 chains by furin protease. However, prevention of cleavage does not impair its function. As to expression, during stage 12, it is highly present throughout the yolk sac. By late stage 14, it localizes in the lateral fat body cells. Starting at stage 14, it localizes to the apodemes. Component of hemolymph clots (at protein level). Expressed in the amniosera. Expressed in rhabdomere of photoreceptor cells in retina (at protein level). Expressed in rhabdomere of photoreceptor cells in retina (at protein level). In terms of tissue distribution, expressed in simper cells as well as interphotoreceptor matrix (at protein level).

The protein resides in the secreted. Its subcellular location is the cell projection. It localises to the rhabdomere. In terms of biological role, constitutes the major component of lipophorin, which mediates transport for various types of lipids in hemolymph. Acts by forming lipoprotein particles that bind lipoproteins and lipids. Also involved in the transport of hydrophobic ligands like juvenile hormones, pheromone hydrocarbons and carotenoids. Required for morphogens wingless (wg) and hedgehog (hh) function, probably by acting as vehicles for the movement of wg and hh, explaining how covalently lipidated wg and hh can spread over long distances. May also be involved in transport and/or metabolism of heme. Involved in yolk granule formation. May be a component of yolk incorporated into yolk granules via yl/yolkless-mediated endocytosis and the endolysosomal pathway. The chain is Apolipophorins from Drosophila melanogaster (Fruit fly).